A 368-amino-acid polypeptide reads, in one-letter code: Peptide chain release factor 2 (368 aa).

At Gln-249 the chain carries N5-methylglutamine.

The protein belongs to the prokaryotic/mitochondrial release factor family. In terms of processing, methylated by PrmC. Methylation increases the termination efficiency of RF2.

It is found in the cytoplasm. Peptide chain release factor 2 directs the termination of translation in response to the peptide chain termination codons UGA and UAA. The sequence is that of Peptide chain release factor 2 from Rhodococcus jostii (strain RHA1).